A 39-amino-acid polypeptide reads, in one-letter code: Photosystem II reaction center protein X (39 aa).

Residues 11–31 (SLLWGAIVVVIPLSAALLFIS) traverse the membrane as a helical segment.

This sequence belongs to the PsbX family. Type 1 subfamily. PSII is composed of 1 copy each of membrane proteins PsbA, PsbB, PsbC, PsbD, PsbE, PsbF, PsbH, PsbI, PsbJ, PsbK, PsbL, PsbM, PsbT, PsbX, PsbY, PsbZ, Psb30/Ycf12, at least 3 peripheral proteins of the oxygen-evolving complex and a large number of cofactors. It forms dimeric complexes.

The protein resides in the plastid. Its subcellular location is the cyanelle thylakoid membrane. In terms of biological role, involved in the binding and/or turnover of quinones at the Q(B) site of photosystem II (PSII). PSII is a light-driven water plastoquinone oxidoreductase, using light energy to abstract electrons from H(2)O, generating a proton gradient subsequently used for ATP formation. This is Photosystem II reaction center protein X from Cyanophora paradoxa.